The following is a 405-amino-acid chain: Serine/threonine transporter SstT (405 aa).

The next 8 membrane-spanning stretches (helical) occupy residues 13–33 (GGSL…LAGF), 43–63 (FLGD…VFVL), 82–102 (IILL…LMSF), 141–161 (ALIN…GIAL), 185–205 (FVIC…IAQT), 217–237 (LGVL…LIVF), 298–318 (MAGA…TLGI), and 339–359 (ASGV…LFGI).

This sequence belongs to the dicarboxylate/amino acid:cation symporter (DAACS) (TC 2.A.23) family.

Its subcellular location is the cell inner membrane. It catalyses the reaction L-serine(in) + Na(+)(in) = L-serine(out) + Na(+)(out). The enzyme catalyses L-threonine(in) + Na(+)(in) = L-threonine(out) + Na(+)(out). In terms of biological role, involved in the import of serine and threonine into the cell, with the concomitant import of sodium (symport system). The protein is Serine/threonine transporter SstT of Shewanella amazonensis (strain ATCC BAA-1098 / SB2B).